The chain runs to 104 residues: Glutaredoxin (104 aa).

Residues 3-103 (MIKAQELVSS…PLLTEAGAVK (101 aa)) enclose the Glutaredoxin domain. A disulfide bond links cysteine 23 and cysteine 26.

The protein belongs to the glutaredoxin family. CPYC subfamily.

It localises to the cytoplasm. Functionally, has a glutathione-disulfide oxidoreductase activity in the presence of NADPH and glutathione reductase. Reduces low molecular weight disulfides and proteins. The chain is Glutaredoxin from Vernicia fordii (Tung).